The chain runs to 226 residues: V-type proton ATPase subunit E 2 (226 aa).

This sequence belongs to the V-ATPase E subunit family. As to quaternary structure, V-ATPase is a heteromultimeric enzyme made up of two complexes: the ATP-hydrolytic V1 complex and the proton translocation V0 complex. The V1 complex consists of three catalytic AB heterodimers that form a heterohexamer, three peripheral stalks each consisting of EG heterodimers, one central rotor including subunits D and F, and the regulatory subunits C and H. The proton translocation complex V0 consists of the proton transport subunit a, a ring of proteolipid subunits c9c'', rotary subunit d, subunits e and f, and the accessory subunits ATP6AP1/Ac45 and ATP6AP2/PRR. Testis specific.

In terms of biological role, subunit of the V1 complex of vacuolar(H+)-ATPase (V-ATPase), a multisubunit enzyme composed of a peripheral complex (V1) that hydrolyzes ATP and a membrane integral complex (V0) that translocates protons. V-ATPase is responsible for acidifying and maintaining the pH of intracellular compartments and in some cell types, is targeted to the plasma membrane, where it is responsible for acidifying the extracellular environment. The polypeptide is V-type proton ATPase subunit E 2 (ATP6V1E2) (Homo sapiens (Human)).